A 230-amino-acid chain; its full sequence is Large ribosomal subunit protein uL1 (230 aa).

It belongs to the universal ribosomal protein uL1 family. In terms of assembly, part of the 50S ribosomal subunit.

Binds directly to 23S rRNA. The L1 stalk is quite mobile in the ribosome, and is involved in E site tRNA release. Functionally, protein L1 is also a translational repressor protein, it controls the translation of the L11 operon by binding to its mRNA. The protein is Large ribosomal subunit protein uL1 of Rubrobacter xylanophilus (strain DSM 9941 / JCM 11954 / NBRC 16129 / PRD-1).